Consider the following 131-residue polypeptide: Small nuclear ribonucleoprotein SmD3b (131 aa).

Residues 7–79 (IPVKLLHEAS…VRFMVIPDIL (73 aa)) form the Sm domain. Residues 96 to 131 (SSSLGVGRGRGAMRGKPAAGPGRGTGGRGAVPPVRR) form a disordered region.

The protein belongs to the snRNP core protein family. As to expression, expressed in young seedlings, roots, leaves, flowers and immature siliques.

It is found in the cytoplasm. It localises to the cytosol. The protein resides in the nucleus. Its function is as follows. Core component of the spliceosomal U1, U2, U4 and U5 small nuclear ribonucleoproteins (snRNPs), the building blocks of the spliceosome. May play a major role in the splicing of cellular pre-mRNAs. Required for normal plant development. The protein is Small nuclear ribonucleoprotein SmD3b of Arabidopsis thaliana (Mouse-ear cress).